Reading from the N-terminus, the 174-residue chain is MARKGAPKKRLLLPDPIYNKVSVHMLVNRILKNGKKSIAYRIVYSVFRKISETMNQNPVEVWEKALNNVKPRVEVKPRRRAGSIQQVPRVMPSAERARAIAIRWIVSACQKKAGKDMISKLFSEISEASNKNGAAFRKKEELHKMALSNLMNSRRPDKIVKAITEQSEINDDVY.

It belongs to the universal ribosomal protein uS7 family. Part of the 30S ribosomal subunit.

The protein resides in the plastid. The protein localises to the chloroplast. One of the primary rRNA binding proteins, it binds directly to 16S rRNA where it nucleates assembly of the head domain of the 30S subunit. The chain is Small ribosomal subunit protein uS7c (rps7) from Stigeoclonium helveticum (Green alga).